Here is a 155-residue protein sequence, read N- to C-terminus: Endoribonuclease YbeY (155 aa).

Residues H120, H124, and H130 each coordinate Zn(2+).

Belongs to the endoribonuclease YbeY family. Zn(2+) is required as a cofactor.

The protein localises to the cytoplasm. Single strand-specific metallo-endoribonuclease involved in late-stage 70S ribosome quality control and in maturation of the 3' terminus of the 16S rRNA. In Staphylococcus aureus (strain MSSA476), this protein is Endoribonuclease YbeY.